We begin with the raw amino-acid sequence, 119 residues long: Small ribosomal subunit protein uS13m (119 aa).

This sequence belongs to the universal ribosomal protein uS13 family. In terms of assembly, part of the small ribosomal subunit.

It localises to the mitochondrion. Functionally, located at the top of the head of the small subunit, it contacts several helices of the small subunit rRNA. This chain is Small ribosomal subunit protein uS13m (RPS13), found in Prototheca wickerhamii.